The sequence spans 48 residues: ATP synthase protein 8 (48 aa).

A helical transmembrane segment spans residues 13–35 (LTYGFTFILTILFLTSYVFLPMI).

The protein belongs to the ATPase protein 8 family. In terms of assembly, F-type ATPases have 2 components, CF(1) - the catalytic core - and CF(0) - the membrane proton channel. In yeast, the dimeric form of ATP synthase consists of 18 polypeptides: alpha, beta, gamma, delta, epsilon, 4 (B), 5 (OSCP), 6 (A), 8, 9 (C), d, E (Tim11), f, g, h, i, j and k.

It is found in the mitochondrion membrane. Mitochondrial membrane ATP synthase (F(1)F(0) ATP synthase or Complex V) produces ATP from ADP in the presence of a proton gradient across the membrane which is generated by electron transport complexes of the respiratory chain. F-type ATPases consist of two structural domains, F(1) - containing the extramembraneous catalytic core and F(0) - containing the membrane proton channel, linked together by a central stalk and a peripheral stalk. During catalysis, ATP synthesis in the catalytic domain of F(1) is coupled via a rotary mechanism of the central stalk subunits to proton translocation. Part of the complex F(0) domain. Minor subunit located with subunit a in the membrane. In Eremothecium gossypii (strain ATCC 10895 / CBS 109.51 / FGSC 9923 / NRRL Y-1056) (Yeast), this protein is ATP synthase protein 8 (ATP8).